Reading from the N-terminus, the 400-residue chain is Clotting factor B (400 aa).

A signal peptide spans 1–23 (MTWICVITLFALASATLGNKVSR). One can recognise a Clip domain in the interval 36 to 80 (ECTARGGLKGSCKSLIDCPSVLATLKDSFPVVCSWNGRFQPIVCC). Intrachain disulfides connect C37–C79, C47–C68, and C53–C80. Positions 104–124 (LPRLHISGCGKRKVKIDITTV) are cleaved as a propeptide — activation peptide. N140 is a glycosylation site (N-linked (GlcNAc...) asparagine). The Peptidase S1 domain maps to 148-392 (IAGGVEAKIG…YLDWIAKVTN (245 aa)). Active-site charge relay system residues include H192 and D240. N-linked (GlcNAc...) asparagine glycosylation occurs at N251. 2 disulfide bridges follow: C307/C329 and C340/C368. Residue S344 is the Charge relay system of the active site. Residue N352 is glycosylated (N-linked (GlcNAc...) asparagine).

Belongs to the peptidase S1 family. CLIP subfamily. Upon activation by factor C, it is converted to a two-chain active form composed of a light and a heavy chain linked by a disulfide bond.

It localises to the secreted. The catalysed reaction is Selective cleavage of 98-Arg-|-Ile-99 bond in Limulus proclotting enzyme to form active clotting enzyme.. Strongly inhibited by alpha2-plasmin inhibitor and DFP. Partially inhibited by benzamidine, leupeptin and PCMB. In terms of biological role, this enzyme is closely associated with an endotoxin-sensitive hemolymph coagulation system which may play important roles in both hemostasis and host defense mechanisms. Its active form catalyzes the activation of proclotting enzyme. Does not activate the mammalian coagulation factors factor IX, factor X, prothrombin, plasminogen, protein C or prekallikrein. Does not hydrolyze fibrinogen. Does not catalyze the activation of factor C or coagulogen. The protein is Clotting factor B of Tachypleus tridentatus (Japanese horseshoe crab).